We begin with the raw amino-acid sequence, 126 residues long: Holo-[acyl-carrier-protein] synthase (126 aa).

The Mg(2+) site is built by aspartate 9 and glutamate 58.

Belongs to the P-Pant transferase superfamily. AcpS family. The cofactor is Mg(2+).

Its subcellular location is the cytoplasm. The enzyme catalyses apo-[ACP] + CoA = holo-[ACP] + adenosine 3',5'-bisphosphate + H(+). Its function is as follows. Transfers the 4'-phosphopantetheine moiety from coenzyme A to a Ser of acyl-carrier-protein. The protein is Holo-[acyl-carrier-protein] synthase of Yersinia pseudotuberculosis serotype I (strain IP32953).